The following is a 111-amino-acid chain: uncharacterized protein (111 aa).

This is an uncharacterized protein from Ureaplasma parvum serovar 3 (strain ATCC 700970).